Reading from the N-terminus, the 757-residue chain is MEGPEIKFAEAVLDNGKYGTRTVRFEAGRLAQQAQGAVAAYLDEDTMLLSATSVGKHPKDNFDFFPLTIDVEERSYAAGKIPGSFFRREGRPSTEAILVCRLIDRPLRPSFITGLRNEVQVVITVLSIAPDEFYDSLAINAASASSMLSGIPFSGPIAGVRLALIGDQWVVFPKHSQLKEAVFDITVAGRVVTDSEGNEDVAIMMVEAEATEGAWDLIQGGATKPDEAIVAQGLEAAKPFIQQLVAAQASLAQQAAKPTVDYPVFLPYAQETYDAVSALALDELGTVYQTADKIERQDADDALKTRTKEAVAAKVEAGELPQSALTEFSAAYKSVTKTVVRGRILRDGVRMDGRGLADIRPLDAEVQVIPRVHGSAIFQRGETQILGVTTLNMLKMEQQIDSLSPITKKRYLHHYNFPPYSTGETGRVGSPKRREIGHGFLAERALVPVLPSREDFPYAIRQVSEALGSNGSTSMGSVCASTLSLLNAGVPLRAPVAGIAMGLVSDTVDGQVRYAALTDILGAEDALGDMDFKVAGTSEFVTAIQLDTKLDGIPTSVLDGALKQAKEARTAILGVLNQAIDGPDEMAPTAPRVISVNIPVDKIGELIGPKGKTINAIQDETGADISIEEDGTVYIGAVDGPSADAARAQVNAIANPTNPEVGESFLGTVVKIATFGAFVSLLPGKDGLLHISEVRKLAGGKRVENVEDVLGVGQKILVEITKIDDRGKLSLAPVLEETADQEGRDAASHGSEAPAEG.

Mg(2+) is bound by residues Asp525 and Asp531. The KH domain maps to 591–650; the sequence is PRVISVNIPVDKIGELIGPKGKTINAIQDETGADISIEEDGTVYIGAVDGPSADAARAQV. Residues 662 to 734 enclose the S1 motif domain; sequence GESFLGTVVK…DRGKLSLAPV (73 aa). The disordered stretch occupies residues 737 to 757; sequence ETADQEGRDAASHGSEAPAEG.

This sequence belongs to the polyribonucleotide nucleotidyltransferase family. Mg(2+) is required as a cofactor.

The protein localises to the cytoplasm. The catalysed reaction is RNA(n+1) + phosphate = RNA(n) + a ribonucleoside 5'-diphosphate. Functionally, involved in mRNA degradation. Catalyzes the phosphorolysis of single-stranded polyribonucleotides processively in the 3'- to 5'-direction. The sequence is that of Polyribonucleotide nucleotidyltransferase from Clavibacter michiganensis subsp. michiganensis (strain NCPPB 382).